Consider the following 473-residue polypeptide: MTKNIGKITQIISAVVDVKFTNNGKLPEILNALECYNDTRRVVLEVAQHIGDDTVRCIAMDSMEGLVRGVEVIDTGSPIRIPVGTETLGRIMNVVGEPIDGKGDIKSSNISSIYKPAPDFTNQSTERNILVTGIKVIDLLAPYTKGGKIGLFGGAGVGKTVLIMELINNVAKAHGGYTVFAGVGERTREGNDLYHEMIDSGVINLAEPEKSKVALVYGQMNEPPGARARVALSGLTIAESFRDMNEGQDVLFFVDNIFRFTQAGSEVSALLGRIPSAVGYQPTLATDMGELQERITSTKHGSITSVQAIYVPADDLTDPAPATSFAHLDATTVLSRQIAEFGIYPAVDPLDSNSQVLDPMIVGEEHYSVARQVQQVLQTYKSLQDIITILGMDELSEEDKLTVARARKIQRFLSQPFHVAEVFTGAAGKFVNLADTIAGFKGLVEGKYDDLPEAAFYMVGTIDEAIKKAQTLK.

153 to 160 (GGAGVGKT) provides a ligand contact to ATP.

The protein belongs to the ATPase alpha/beta chains family. In terms of assembly, F-type ATPases have 2 components, CF(1) - the catalytic core - and CF(0) - the membrane proton channel. CF(1) has five subunits: alpha(3), beta(3), gamma(1), delta(1), epsilon(1). CF(0) has three main subunits: a(1), b(2) and c(9-12). The alpha and beta chains form an alternating ring which encloses part of the gamma chain. CF(1) is attached to CF(0) by a central stalk formed by the gamma and epsilon chains, while a peripheral stalk is formed by the delta and b chains.

Its subcellular location is the cell inner membrane. It carries out the reaction ATP + H2O + 4 H(+)(in) = ADP + phosphate + 5 H(+)(out). In terms of biological role, produces ATP from ADP in the presence of a proton gradient across the membrane. The catalytic sites are hosted primarily by the beta subunits. The polypeptide is ATP synthase subunit beta (Rickettsia rickettsii (strain Iowa)).